A 177-amino-acid chain; its full sequence is Large ribosomal subunit protein uL6 (177 aa).

The protein belongs to the universal ribosomal protein uL6 family. As to quaternary structure, part of the 50S ribosomal subunit.

Its function is as follows. This protein binds to the 23S rRNA, and is important in its secondary structure. It is located near the subunit interface in the base of the L7/L12 stalk, and near the tRNA binding site of the peptidyltransferase center. The protein is Large ribosomal subunit protein uL6 of Brucella anthropi (strain ATCC 49188 / DSM 6882 / CCUG 24695 / JCM 21032 / LMG 3331 / NBRC 15819 / NCTC 12168 / Alc 37) (Ochrobactrum anthropi).